Reading from the N-terminus, the 1391-residue chain is DNA-directed RNA polymerase subunit beta' (1391 aa).

Zn(2+) contacts are provided by Cys-70, Cys-72, Cys-85, and Cys-88. Asp-461, Asp-463, and Asp-465 together coordinate Mg(2+). 4 residues coordinate Zn(2+): Cys-809, Cys-882, Cys-889, and Cys-892.

This sequence belongs to the RNA polymerase beta' chain family. As to quaternary structure, the RNAP catalytic core consists of 2 alpha, 1 beta, 1 beta' and 1 omega subunit. When a sigma factor is associated with the core the holoenzyme is formed, which can initiate transcription. Mg(2+) is required as a cofactor. Requires Zn(2+) as cofactor.

It catalyses the reaction RNA(n) + a ribonucleoside 5'-triphosphate = RNA(n+1) + diphosphate. DNA-dependent RNA polymerase catalyzes the transcription of DNA into RNA using the four ribonucleoside triphosphates as substrates. The polypeptide is DNA-directed RNA polymerase subunit beta' (Zymomonas mobilis subsp. mobilis (strain ATCC 31821 / ZM4 / CP4)).